The chain runs to 31 residues: Branched-chain-amino-acid aminotransferase, mitochondrial (31 aa).

Residues 1–27 constitute a mitochondrion transit peptide; sequence MAAAALRQIWARKFLPVPWLLCGPRRY.

The protein belongs to the class-IV pyridoxal-phosphate-dependent aminotransferase family. Homodimer. The cofactor is pyridoxal 5'-phosphate.

The protein localises to the mitochondrion. It carries out the reaction L-leucine + 2-oxoglutarate = 4-methyl-2-oxopentanoate + L-glutamate. The enzyme catalyses L-isoleucine + 2-oxoglutarate = (S)-3-methyl-2-oxopentanoate + L-glutamate. It catalyses the reaction L-valine + 2-oxoglutarate = 3-methyl-2-oxobutanoate + L-glutamate. Its function is as follows. Catalyzes the first reaction in the catabolism of the essential branched chain amino acids leucine, isoleucine, and valine. May also function as a transporter of branched chain alpha-keto acids. The sequence is that of Branched-chain-amino-acid aminotransferase, mitochondrial (BCAT2) from Sus scrofa (Pig).